Reading from the N-terminus, the 344-residue chain is Heptahelical transmembrane protein 3 (344 aa).

At M1–N76 the chain is on the cytoplasmic side. The helical transmembrane segment at I77–E97 threads the bilayer. Topologically, residues T98–P147 are extracellular. A helical transmembrane segment spans residues W148–L168. Residues A169–Y184 lie on the Cytoplasmic side of the membrane. The chain crosses the membrane as a helical span at residues A185–C205. The Extracellular segment spans residues H206–R210. Residues L211–P231 traverse the membrane as a helical segment. Residues A232 to N244 are Cytoplasmic-facing. Residues L245–W265 form a helical membrane-spanning segment. The Extracellular portion of the chain corresponds to D266–N269. A helical membrane pass occupies residues V270–F290. Residues Y291–Q312 lie on the Cytoplasmic side of the membrane. The chain crosses the membrane as a helical span at residues I313–I333. Residues D334–F344 are Extracellular-facing.

The protein belongs to the ADIPOR family. In terms of tissue distribution, expressed in roots and flowers.

It localises to the membrane. In terms of biological role, may play a role in abiotic stress response. The chain is Heptahelical transmembrane protein 3 (HHP3) from Arabidopsis thaliana (Mouse-ear cress).